Here is a 372-residue protein sequence, read N- to C-terminus: N-methyl-L-tryptophan oxidase (372 aa).

4–34 (DLIIIGSGSVGAAAGYYATRAGLKVLMTDAH) is a binding site for FAD. C307 is subject to S-8alpha-FAD cysteine.

The protein belongs to the MSOX/MTOX family. MTOX subfamily. Monomer. FAD serves as cofactor.

The catalysed reaction is N(alpha)-methyl-L-tryptophan + O2 + H2O = L-tryptophan + formaldehyde + H2O2. In terms of biological role, catalyzes the oxidative demethylation of N-methyl-L-tryptophan. This chain is N-methyl-L-tryptophan oxidase, found in Salmonella newport (strain SL254).